A 292-amino-acid polypeptide reads, in one-letter code: Probable 2-(5''-triphosphoribosyl)-3'-dephosphocoenzyme-A synthase (292 aa).

This sequence belongs to the CitG/MdcB family.

The enzyme catalyses 3'-dephospho-CoA + ATP = 2'-(5''-triphospho-alpha-D-ribosyl)-3'-dephospho-CoA + adenine. The sequence is that of Probable 2-(5''-triphosphoribosyl)-3'-dephosphocoenzyme-A synthase from Shigella flexneri serotype 5b (strain 8401).